We begin with the raw amino-acid sequence, 35 residues long: Photosystem II reaction center protein T (35 aa).

A helical transmembrane segment spans residues 3–23 (ALVYTFLLVSTLGIIFFAIFF).

It belongs to the PsbT family. PSII is composed of 1 copy each of membrane proteins PsbA, PsbB, PsbC, PsbD, PsbE, PsbF, PsbH, PsbI, PsbJ, PsbK, PsbL, PsbM, PsbT, PsbY, PsbZ, Psb30/Ycf12, at least 3 peripheral proteins of the oxygen-evolving complex and a large number of cofactors. It forms dimeric complexes.

The protein localises to the plastid. The protein resides in the chloroplast thylakoid membrane. Functionally, found at the monomer-monomer interface of the photosystem II (PS II) dimer, plays a role in assembly and dimerization of PSII. PSII is a light-driven water plastoquinone oxidoreductase, using light energy to abstract electrons from H(2)O, generating a proton gradient subsequently used for ATP formation. This is Photosystem II reaction center protein T from Gossypium barbadense (Sea Island cotton).